Reading from the N-terminus, the 91-residue chain is Sec-independent protein translocase protein TatA (91 aa).

The helical transmembrane segment at 1–21 (MGSMSVWHWVIVAVVVMLLFG) threads the bilayer. A disordered region spans residues 42-91 (GMADDETQPTNTTSVPPVGPNDPVRTLPHQGAPGTAPQQTHVPAGDHKAV).

It belongs to the TatA/E family. The Tat system comprises two distinct complexes: a TatABC complex, containing multiple copies of TatA, TatB and TatC subunits, and a separate TatA complex, containing only TatA subunits. Substrates initially bind to the TatABC complex, which probably triggers association of the separate TatA complex to form the active translocon.

The protein localises to the cell inner membrane. Functionally, part of the twin-arginine translocation (Tat) system that transports large folded proteins containing a characteristic twin-arginine motif in their signal peptide across membranes. TatA could form the protein-conducting channel of the Tat system. This chain is Sec-independent protein translocase protein TatA, found in Methylorubrum populi (strain ATCC BAA-705 / NCIMB 13946 / BJ001) (Methylobacterium populi).